A 409-amino-acid chain; its full sequence is MNQNQSFLAKMANGSLVLQILVGIIAGIIVATLSESAAQSVAFLGQLFVGALKAIAPILVFILVAASIANQKKNAKTNMRPIVILYLFGTFAAAVTAVLMSFAFPTTLALTLDAAQASPPEGIGEVIHTLLFKLVDNPVNALMTGNYIGILAWGVGLGLALHHATDSTKQVFADVSHGVSQMVRFIIRLAPIGIFGLVSSTFASTGFSAIAGYMHLLLVLLGAMAIMALIINPAIVYFKIRRNPYPLVFTCIRESGVTAFFTRSSAANIPVNMALCEKLKLHEDTYSVSIPLGATINMGGAAITITILTLAAANTMGVQVDILTAILLSVVAGISACGASGVAGGSLLLIPLACSLFGISNDIAMQVVAVGFIIGVIQDSAETGLNSSTDVIFTAAACEAAERKENAGA.

9 helical membrane passes run 14–34, 48–68, 82–102, 141–161, 192–212, 216–236, 290–310, 322–342, and 357–377; these read GSLV…ATLS, FVGA…AASI, IVIL…LMSF, ALMT…GLAL, IGIF…AIAG, LLLV…PAIV, IPLG…ILTL, ILTA…ASGV, and FGIS…IGVI.

This sequence belongs to the dicarboxylate/amino acid:cation symporter (DAACS) (TC 2.A.23) family.

It localises to the cell inner membrane. It carries out the reaction L-serine(in) + Na(+)(in) = L-serine(out) + Na(+)(out). The enzyme catalyses L-threonine(in) + Na(+)(in) = L-threonine(out) + Na(+)(out). In terms of biological role, involved in the import of serine and threonine into the cell, with the concomitant import of sodium (symport system). This Shewanella woodyi (strain ATCC 51908 / MS32) protein is Serine/threonine transporter SstT.